The primary structure comprises 439 residues: MSQTHLSNQKFADLPLHPEVKQALAENGFEFCTPIQALSLPVLLQSKDIAGQAQTGTGKTMAFLVATFNHLLSTPVPENRQLNQPRAIIMAPTRELAIQIAKDAILLAKHSHLKVGIVYGGESYDVQRKTLDQGVDILIGTTGRIIDYVRQGIINLGGIQAVVLDEADRMFDLGFIKDIRFLFRRMPSADQRLNMLFSATLSMKVQELAYDHMNEPVKVEIAPEEKTSKNIKEEIFYPSQEDKMRLLLTLIEEDWPEKAIVFSNTKHSCENLWSWLEGDGHRVGLLTGDVPQKKRIRILEQFTQGQLDILVATDVAARGLHISDVSHVYNYDLPDDCEDYVHRIGRTGRAGNKGVSVSFACEEYALNLPAIETYINHSIPVSNYDRDALLEDIPPPVKIHRRHPAGARNLRERSGAGRPQGAHRSGGRPPRHDRTRRQP.

The short motif at 9 to 37 is the Q motif element; that stretch reads QKFADLPLHPEVKQALAENGFEFCTPIQA. In terms of domain architecture, Helicase ATP-binding spans 40 to 219; sequence LPVLLQSKDI…YDHMNEPVKV (180 aa). 53-60 is a binding site for ATP; sequence AQTGTGKT. The short motif at 165-168 is the DEAD box element; the sequence is DEAD. The region spanning 243–390 is the Helicase C-terminal domain; sequence KMRLLLTLIE…VSNYDRDALL (148 aa). The interval 395–439 is disordered; it reads PPVKIHRRHPAGARNLRERSGAGRPQGAHRSGGRPPRHDRTRRQP. A compositionally biased stretch (basic residues) spans 425 to 439; it reads SGGRPPRHDRTRRQP.

Belongs to the DEAD box helicase family. RhlB subfamily. In terms of assembly, component of the RNA degradosome, which is a multiprotein complex involved in RNA processing and mRNA degradation.

It localises to the cytoplasm. It catalyses the reaction ATP + H2O = ADP + phosphate + H(+). Functionally, DEAD-box RNA helicase involved in RNA degradation. Has RNA-dependent ATPase activity and unwinds double-stranded RNA. In Shewanella sp. (strain ANA-3), this protein is ATP-dependent RNA helicase RhlB.